The sequence spans 764 residues: Bifunctional type I diterpene synthase tndC (764 aa).

The interval 1-324 (MEYRYSTVVD…CPRYHPWSSY (324 aa)) is terpene cyclase. Mg(2+) contacts are provided by D92 and D96. The DDXXD 1 motif lies at 92–96 (DDVTD). The NSE/DTE signature appears at 224–232 (NDLYSWQKE). Residues 325 to 761 (NERQLDWMKN…FQLRLILEML (437 aa)) form a prenyltransferase region. Residues 377–403 (AVNGNGASHTSSIKGSTGGNGVTHSPV) are disordered. Residues 381–391 (NGASHTSSIKG) show a composition bias toward polar residues. Residues K484, R487, and H516 each coordinate isopentenyl diphosphate. The Mg(2+) site is built by D523 and D527. The DDXXD 2 motif lies at 523–527 (DDLED). R532 provides a ligand contact to dimethylallyl diphosphate. An isopentenyl diphosphate-binding site is contributed by R533. Dimethylallyl diphosphate is bound by residues K610, T611, Q646, N653, K663, and K673.

It in the N-terminal section; belongs to the terpene synthase family. This sequence in the C-terminal section; belongs to the FPP/GGPP synthase family.

The enzyme catalyses isopentenyl diphosphate + (2E,6E)-farnesyl diphosphate = (2E,6E,10E)-geranylgeranyl diphosphate + diphosphate. The catalysed reaction is (2E,6E,10E)-geranylgeranyl diphosphate = talarodiene + diphosphate. The protein operates within secondary metabolite biosynthesis; terpenoid biosynthesis. In terms of biological role, bifunctional type I diterpene synthase; part of the gene cluster that mediates the biosynthesis of talaronoid C, a fusicoccane diterpenoid with an unprecedented tricyclic 5/8/6 ring system. The first step in the pathway is performed by the fusicoccadiene synthase tndC that possesses both prenyl transferase and terpene cyclase activity, converting isopentenyl diphosphate and dimethylallyl diphosphate into geranylgeranyl diphosphate (GGDP) and further converting GGDP into talarodiene, a precursor for talaronoid C. The remaining enzymes from the cluster include the cytochrome P450 monooxygenase tndB, the aldehyde reductase tndE and the alcohol dehydrogenase tndF that are involved in the conversion of talarodiene into talaronoid C. The protein is Bifunctional type I diterpene synthase tndC of Aspergillus flavipes.